The chain runs to 431 residues: Glutamate-1-semialdehyde 2,1-aminomutase (431 aa).

Lys-265 carries the N6-(pyridoxal phosphate)lysine modification.

Belongs to the class-III pyridoxal-phosphate-dependent aminotransferase family. HemL subfamily. As to quaternary structure, homodimer. Requires pyridoxal 5'-phosphate as cofactor.

The protein localises to the cytoplasm. It catalyses the reaction (S)-4-amino-5-oxopentanoate = 5-aminolevulinate. It participates in porphyrin-containing compound metabolism; protoporphyrin-IX biosynthesis; 5-aminolevulinate from L-glutamyl-tRNA(Glu): step 2/2. The protein is Glutamate-1-semialdehyde 2,1-aminomutase of Vibrio campbellii (strain ATCC BAA-1116).